We begin with the raw amino-acid sequence, 190 residues long: Lipid A acyltransferase PagP (190 aa).

The first 29 residues, 1 to 29 (MYVAMIIRKYFLIIALLVMPWLAIPSVSA), serve as a signal peptide directing secretion. Residues His62, Asp105, and Ser106 contribute to the active site.

It belongs to the lipid A palmitoyltransferase family. As to quaternary structure, homodimer.

Its subcellular location is the cell outer membrane. The enzyme catalyses a lipid A + a 1,2-diacyl-sn-glycero-3-phosphocholine = a hepta-acyl lipid A + a 2-acyl-sn-glycero-3-phosphocholine. It catalyses the reaction a lipid IVA + a 1,2-diacyl-sn-glycero-3-phosphocholine = a lipid IVB + a 2-acyl-sn-glycero-3-phosphocholine. It carries out the reaction a lipid IIA + a 1,2-diacyl-sn-glycero-3-phosphocholine = a lipid IIB + a 2-acyl-sn-glycero-3-phosphocholine. Transfers a fatty acid residue from the sn-1 position of a phospholipid to the N-linked hydroxyfatty acid chain on the proximal unit of lipid A or its precursors. The sequence is that of Lipid A acyltransferase PagP from Salmonella typhi.